We begin with the raw amino-acid sequence, 65 residues long: Small, acid-soluble spore protein 2 (65 aa).

Belongs to the alpha/beta-type SASP family.

In terms of biological role, SASP are bound to spore DNA. They are double-stranded DNA-binding proteins that cause DNA to change to an a-like conformation. They protect the DNA backbone from chemical and enzymatic cleavage and are thus involved in dormant spore's high resistance to UV light. This is Small, acid-soluble spore protein 2 (sasP-2) from Bacillus cereus.